The sequence spans 127 residues: MSLLRNRLQDLPALCLCVLVLACIGACQSEAYEGTPSPPPKLKMSHWSLVTGRMKELLEPVVNRTRDRWQWFWSPSTFRGFMQTYYDDHLRDLGPRTKAWLLKSKESLLNKTHSLCPRIVCGDKDQG.

The first 27 residues, 1-27 (MSLLRNRLQDLPALCLCVLVLACIGAC), serve as a signal peptide directing secretion.

Belongs to the apolipoprotein C4 family.

It localises to the secreted. In terms of biological role, may participate in lipoprotein metabolism. The sequence is that of Apolipoprotein C-IV (APOC4) from Chlorocebus sabaeus (Green monkey).